The sequence spans 448 residues: tRNA methyltransferase 10 homolog C (448 aa).

The transit peptide at 1–48 (MAFVNTLLRTIRCSAVHTLVQEGRSLSLLKASHQLTQSRKIMLSNHVR) directs the protein to the mitochondrion. A coiled-coil region spans residues 137-165 (REVMKTNRKEKKKELKESKSKIESLDQLE). Positions 144–167 (RKEKKKELKESKSKIESLDQLETK) are disordered. The SAM-dependent MTase TRM10-type domain occupies 190–382 (QRWKCVQAMK…SFVPNRKHDG (193 aa)). Residues 429 to 448 (ERTDDTSIRSTRKRWWEEEN) form a disordered region.

Belongs to the class IV-like SAM-binding methyltransferase superfamily. TRM10 family. As to quaternary structure, component of mitochondrial ribonuclease P. Interacts with HSD17B10/MRPP2.

It localises to the mitochondrion matrix. The protein localises to the mitochondrion nucleoid. It catalyses the reaction adenosine(9) in tRNA + S-adenosyl-L-methionine = N(1)-methyladenosine(9) in tRNA + S-adenosyl-L-homocysteine + H(+). The catalysed reaction is guanosine(9) in tRNA + S-adenosyl-L-methionine = N(1)-methylguanosine(9) in tRNA + S-adenosyl-L-homocysteine + H(+). The enzyme catalyses an adenosine in mRNA + S-adenosyl-L-methionine = an N(1)-methyladenosine in mRNA + S-adenosyl-L-homocysteine + H(+). In terms of biological role, mitochondrial tRNA N(1)-methyltransferase involved in mitochondrial tRNA maturation. Component of mitochondrial ribonuclease P, which cleaves tRNA molecules in their 5'-ends. Together with hsd17b10/mrpp2, forms a subcomplex of the mitochondrial ribonuclease P, named MRPP1-MRPP2 subcomplex, which displays functions that are independent of the ribonuclease P activity. The MRPP1-MRPP2 subcomplex catalyzes the formation of N(1)-methylguanine and N(1)-methyladenine at position 9 (m1G9 and m1A9, respectively) in tRNAs; trmt10c/mrpp1 acting as the catalytic N(1)-methyltransferase subunit. The MRPP1-MRPP2 subcomplex also acts as a tRNA maturation platform: following 5'-end cleavage by the mitochondrial ribonuclease P complex, the MRPP1-MRPP2 subcomplex enhances the efficiency of 3'-processing catalyzed by ELAC2, retains the tRNA product after elac2 processing and presents the nascent tRNA to the mitochondrial CCA tRNA nucleotidyltransferase TRNT1 enzyme. In addition to tRNA N(1)-methyltransferase activity, trmt10c/mrpp1 also acts as a mRNA N(1)-methyltransferase by mediating methylation of adenosine residues at the N(1) position of MT-ND5 mRNA. The chain is tRNA methyltransferase 10 homolog C from Xenopus tropicalis (Western clawed frog).